The chain runs to 423 residues: Dihydroorotase (423 aa).

The Zn(2+) site is built by H60 and H62. Substrate contacts are provided by residues H62–R64 and N94. The Zn(2+) site is built by D151, H178, and H231. N277 is a substrate binding site. D304 lines the Zn(2+) pocket. The active site involves D304. Residue H308 coordinates substrate.

The protein belongs to the metallo-dependent hydrolases superfamily. DHOase family. Class I DHOase subfamily. Zn(2+) is required as a cofactor.

It catalyses the reaction (S)-dihydroorotate + H2O = N-carbamoyl-L-aspartate + H(+). It participates in pyrimidine metabolism; UMP biosynthesis via de novo pathway; (S)-dihydroorotate from bicarbonate: step 3/3. In terms of biological role, catalyzes the reversible cyclization of carbamoyl aspartate to dihydroorotate. The polypeptide is Dihydroorotase (Lactococcus lactis subsp. lactis (strain IL1403) (Streptococcus lactis)).